We begin with the raw amino-acid sequence, 141 residues long: Large ribosomal subunit protein uL11 (141 aa).

Belongs to the universal ribosomal protein uL11 family. Part of the ribosomal stalk of the 50S ribosomal subunit. Interacts with L10 and the large rRNA to form the base of the stalk. L10 forms an elongated spine to which L12 dimers bind in a sequential fashion forming a multimeric L10(L12)X complex. One or more lysine residues are methylated.

Functionally, forms part of the ribosomal stalk which helps the ribosome interact with GTP-bound translation factors. The polypeptide is Large ribosomal subunit protein uL11 (Selenomonas ruminantium).